Consider the following 274-residue polypeptide: Large ribosomal subunit protein uL2 (274 aa).

The tract at residues 221–274 (RGTAMNPVDHPHGGGEGKNFGKHPVTPWGVQTKGKKTRSNKRTDKFIVRRRSKK) is disordered.

Belongs to the universal ribosomal protein uL2 family. As to quaternary structure, part of the 50S ribosomal subunit. Forms a bridge to the 30S subunit in the 70S ribosome.

Functionally, one of the primary rRNA binding proteins. Required for association of the 30S and 50S subunits to form the 70S ribosome, for tRNA binding and peptide bond formation. It has been suggested to have peptidyltransferase activity; this is somewhat controversial. Makes several contacts with the 16S rRNA in the 70S ribosome. This Serratia proteamaculans (strain 568) protein is Large ribosomal subunit protein uL2.